A 640-amino-acid chain; its full sequence is F-box protein MET30 (640 aa).

The span at 1–19 (MRRERQRMMSFEDKDKDDL) shows a compositional bias: basic and acidic residues. The interval 1 to 84 (MRRERQRMMS…ATNDSGTRVQ (84 aa)) is disordered. A necessary to mediate nuclear localization region spans residues 1–299 (MRRERQRMMS…KGHCRIQEFK (299 aa)). Composition is skewed to polar residues over residues 45–56 (TGSSDDLAQGSS) and 64–82 (ATRS…SGTR). A Phosphoserine modification is found at Ser-67. An interaction with SKP1/CBF3D region spans residues 180-225 (KIDFISILPQELSLKILSYLDCQSLCNATRVCRKWQKLADDDRVWY). Residues 180–277 (KIDFISILPQ…TQTTRPWKVI (98 aa)) form an important for mediating homomultimerization region. Residues 181-227 (IDFISILPQELSLKILSYLDCQSLCNATRVCRKWQKLADDDRVWYHM) form the F-box domain. An interaction with MET4 region spans residues 277–640 (IYRERFKVES…VKMYKFDLND (364 aa)). WD repeat units follow at residues 300–328 (GHMD…GIWD), 340–368 (GHSD…RVWN), 380–408 (GHSD…KVWH), 419–449 (GHTE…RMWD), 461–499 (GHVG…TMTD), 509–538 (NEQE…KLWD), 550–578 (GHVE…KVWD), and 607–635 (DKVA…KMYK). The segment covering 481–495 (ATDNTSDGSSPQDDP) has biased composition (polar residues). The tract at residues 481–516 (ATDNTSDGSSPQDDPTMTDGADESDTPSNEQETVLD) is disordered.

Belongs to the WD repeat MET30/SCONB/SCON-2 family. As to quaternary structure, homomultimer. Interacts with CDC53 and SKP1/CBF3D to form the E3 ubiquitin ligase complex SCF(Met30). Interacts with MET4.

It is found in the cytoplasm. Its subcellular location is the nucleus. Its pathway is protein modification; protein ubiquitination. Substrate-recognition component of the SCF(Met30) complex, an E3 ubiquitin ligase complex that mediates the ubiquitination and subsequent proteasomal degradation of target proteins. Negatively regulates sulfur amino acids biosynthesis genes expression. Controls cell cycle function (being required for the G1/S transition and M-phase but not the S-phase), sulfur metabolism, and methionine biosynthesis as part of the SCF(Met30) complex. Required for the efficient binding of CDC45 and MCM proteins to origins of replication. Required for efficient expression of G1 cyclins. The SCF(Met30) complex catalyzes ubiquitination and degradation of the Cdk-inhibitory kinase SWE1. Involved in the S-adenosylmethionine (AdoMet)-mediated inhibition of the transcription function of MET4. The SCF(Met30) complex mediates ubiquitination and subsequent degradation of MET4 and the cellular response to cadmium. The SCF(Met30) complex acts as an inhibitor of autophagy by promoting ubiquitination and degradation of ATG9 in normal conditions. This is F-box protein MET30 from Saccharomyces cerevisiae (strain ATCC 204508 / S288c) (Baker's yeast).